The primary structure comprises 216 residues: Putative germin-like protein 2-1 (216 aa).

A signal peptide spans methionine 1–alanine 21. A disulfide bond links cysteine 31 and cysteine 46. One can recognise a Cupin type-1 domain in the interval serine 60–aspartate 210. Asparagine 67 carries N-linked (GlcNAc...) asparagine glycosylation. Histidine 108, histidine 110, glutamate 115, and histidine 156 together coordinate Mn(2+).

It belongs to the germin family. In terms of assembly, oligomer (believed to be a pentamer but probably hexamer).

The protein resides in the secreted. It localises to the extracellular space. The protein localises to the apoplast. Its function is as follows. May play a role in plant defense. Probably has no oxalate oxidase activity even if the active site is conserved. This Oryza sativa subsp. japonica (Rice) protein is Putative germin-like protein 2-1.